A 274-amino-acid polypeptide reads, in one-letter code: Nitrogenase iron protein (274 aa).

8–15 (GKGGIGKS) provides a ligand contact to ATP. Cys-94 serves as a coordination point for [4Fe-4S] cluster. Arg-97 is modified (ADP-ribosylarginine; by dinitrogenase reductase ADP-ribosyltransferase). [4Fe-4S] cluster is bound at residue Cys-131.

It belongs to the NifH/BchL/ChlL family. In terms of assembly, homodimer. [4Fe-4S] cluster serves as cofactor. Post-translationally, the reversible ADP-ribosylation of Arg-97 inactivates the nitrogenase reductase and regulates nitrogenase activity.

The enzyme catalyses N2 + 8 reduced [2Fe-2S]-[ferredoxin] + 16 ATP + 16 H2O = H2 + 8 oxidized [2Fe-2S]-[ferredoxin] + 2 NH4(+) + 16 ADP + 16 phosphate + 6 H(+). In terms of biological role, the key enzymatic reactions in nitrogen fixation are catalyzed by the nitrogenase complex, which has 2 components: the iron protein and the molybdenum-iron protein. This is Nitrogenase iron protein from Chlorobium limicola (strain DSM 245 / NBRC 103803 / 6330).